A 624-amino-acid chain; its full sequence is Alpha-galactosidase 3 (624 aa).

The first 22 residues, 1–22, serve as a signal peptide directing secretion; it reads MSPSAAVLIPLAAAVLLRPVVG. N-linked (GlcNAc...) asparagine glycans are attached at residues N37, N56, N197, N259, and N293. Catalysis depends on D347, which acts as the Nucleophile. A glycan (N-linked (GlcNAc...) asparagine) is linked at N393. D412 functions as the Proton donor in the catalytic mechanism. N469 is a glycosylation site (N-linked (GlcNAc...) asparagine).

It belongs to the glycosyl hydrolase 27 family.

It localises to the secreted. The catalysed reaction is Hydrolysis of terminal, non-reducing alpha-D-galactose residues in alpha-D-galactosides, including galactose oligosaccharides, galactomannans and galactolipids.. Its function is as follows. Alpha-galactosidase involved in the degradation of simple oligosaccharides like melibiose, raffinose and stachyose, and of polymeric galacto(gluco)mannans. The polypeptide is Alpha-galactosidase 3 (agl3) (Hypocrea jecorina (Trichoderma reesei)).